Here is a 271-residue protein sequence, read N- to C-terminus: Tryptophan synthase alpha chain (271 aa).

Catalysis depends on proton acceptor residues glutamate 56 and aspartate 67.

It belongs to the TrpA family. In terms of assembly, tetramer of two alpha and two beta chains.

It catalyses the reaction (1S,2R)-1-C-(indol-3-yl)glycerol 3-phosphate + L-serine = D-glyceraldehyde 3-phosphate + L-tryptophan + H2O. It participates in amino-acid biosynthesis; L-tryptophan biosynthesis; L-tryptophan from chorismate: step 5/5. In terms of biological role, the alpha subunit is responsible for the aldol cleavage of indoleglycerol phosphate to indole and glyceraldehyde 3-phosphate. This chain is Tryptophan synthase alpha chain, found in Mycobacterium avium (strain 104).